The following is a 402-amino-acid chain: MLAKMSFMQNVKNIQEVDVNHKRVLIRVDFNVPLDENLNITDDTRIRESLPTIQFCIDNKAKDIILVSHLGRPKGVEEKLSLKPFLKRLERLLNHEVVFSQNIAQLKQALNENAPTRIFLLENIRFLKGEEENDENLAKDLASLCDVFVNDAFGTSHRKHASTYGTAKFAPIKVSGFLLKKEIDSFYQAFNHPLRPLLLIVGGAKVSSKLTLLKNILDLIDKLIIAGAMSNTFLKALGYDVQDSSVEDALINDALELLQSAKEKKVKVYLPIDAVTTDDILNPKHIKISPVQDIEPKHKIADIGPASLKLFSEVIESAPTILWNGPLGVHEKQEFARGTTFLAHKIANTYAFSLIGGGDTIDAINRAGEKDNMSFISTGGGASLELLEGKILPCFEVLDKRH.

Residues 29–31 (DFN), Arg-45, 69–72 (HLGR), Arg-125, and Arg-158 each bind substrate. ATP is bound by residues Lys-209, Glu-331, and 357–360 (GGDT).

It belongs to the phosphoglycerate kinase family.

Its subcellular location is the cytoplasm. The catalysed reaction is (2R)-3-phosphoglycerate + ATP = (2R)-3-phospho-glyceroyl phosphate + ADP. It participates in carbohydrate degradation; glycolysis; pyruvate from D-glyceraldehyde 3-phosphate: step 2/5. The polypeptide is Phosphoglycerate kinase (pgk) (Helicobacter pylori (strain J99 / ATCC 700824) (Campylobacter pylori J99)).